The following is a 382-amino-acid chain: Nitric oxide reductase FlRd-NAD(+) reductase (382 aa).

Belongs to the FAD-dependent oxidoreductase family. The cofactor is FAD.

The protein localises to the cytoplasm. It catalyses the reaction 2 reduced [nitric oxide reductase rubredoxin domain] + NAD(+) + H(+) = 2 oxidized [nitric oxide reductase rubredoxin domain] + NADH. It participates in nitrogen metabolism; nitric oxide reduction. Its function is as follows. One of at least two accessory proteins for anaerobic nitric oxide (NO) reductase. Reduces the rubredoxin moiety of NO reductase. This chain is Nitric oxide reductase FlRd-NAD(+) reductase, found in Vibrio vulnificus (strain YJ016).